Consider the following 121-residue polypeptide: uncharacterized protein (121 aa).

This is an uncharacterized protein from Caenorhabditis elegans.